A 445-amino-acid chain; its full sequence is tRNA-2-methylthio-N(6)-dimethylallyladenosine synthase (445 aa).

The MTTase N-terminal domain maps to 3 to 124 (KKLYIKTYGC…LPELISKVVR (122 aa)). Residues cysteine 12, cysteine 48, cysteine 87, cysteine 162, cysteine 166, and cysteine 169 each coordinate [4Fe-4S] cluster. Residues 148 to 380 (YPQGTSAFIS…QQELMAQQLA (233 aa)) enclose the Radical SAM core domain. In terms of domain architecture, TRAM spans 383 to 445 (TSCVGSTMKV…SLNSLTGEIL (63 aa)).

This sequence belongs to the methylthiotransferase family. MiaB subfamily. Monomer. The cofactor is [4Fe-4S] cluster.

Its subcellular location is the cytoplasm. The enzyme catalyses N(6)-dimethylallyladenosine(37) in tRNA + (sulfur carrier)-SH + AH2 + 2 S-adenosyl-L-methionine = 2-methylsulfanyl-N(6)-dimethylallyladenosine(37) in tRNA + (sulfur carrier)-H + 5'-deoxyadenosine + L-methionine + A + S-adenosyl-L-homocysteine + 2 H(+). Catalyzes the methylthiolation of N6-(dimethylallyl)adenosine (i(6)A), leading to the formation of 2-methylthio-N6-(dimethylallyl)adenosine (ms(2)i(6)A) at position 37 in tRNAs that read codons beginning with uridine. The polypeptide is tRNA-2-methylthio-N(6)-dimethylallyladenosine synthase (Rickettsia rickettsii (strain Iowa)).